The sequence spans 427 residues: Tol-Pal system protein TolB (427 aa).

An N-terminal signal peptide occupies residues 1–25 (MKTFAQLRLLLAAAALALLSFSAQA).

Belongs to the TolB family. In terms of assembly, the Tol-Pal system is composed of five core proteins: the inner membrane proteins TolA, TolQ and TolR, the periplasmic protein TolB and the outer membrane protein Pal. They form a network linking the inner and outer membranes and the peptidoglycan layer.

It is found in the periplasm. Functionally, part of the Tol-Pal system, which plays a role in outer membrane invagination during cell division and is important for maintaining outer membrane integrity. The sequence is that of Tol-Pal system protein TolB from Azoarcus sp. (strain BH72).